The following is a 458-amino-acid chain: Mitochondrial distribution and morphology protein 10 (458 aa).

The segment at 307–339 (LDQRRTEPLDAPNTNSSVFSKERVQKKQGPKED) is disordered. Residues 326–339 (SKERVQKKQGPKED) are compositionally biased toward basic and acidic residues.

This sequence belongs to the MDM10 family. As to quaternary structure, component of the ER-mitochondria encounter structure (ERMES) or MDM complex, composed of MMM1, MDM10, MDM12 and MDM34. Associates with the mitochondrial outer membrane sorting assembly machinery SAM(core) complex.

Its subcellular location is the mitochondrion outer membrane. Its function is as follows. Component of the ERMES/MDM complex, which serves as a molecular tether to connect the endoplasmic reticulum and mitochondria. Components of this complex are involved in the control of mitochondrial shape and protein biogenesis and may function in phospholipid exchange. MDM10 is involved in the late assembly steps of the general translocase of the mitochondrial outer membrane (TOM complex). Functions in the TOM40-specific route of the assembly of outer membrane beta-barrel proteins, including the association of TOM40 with the receptor TOM22 and small TOM proteins. Can associate with the SAM(core) complex as well as the MDM12-MMM1 complex, both involved in late steps of the major beta-barrel assembly pathway, that is responsible for biogenesis of all outer membrane beta-barrel proteins. May act as a switch that shuttles between both complexes and channels precursor proteins into the TOM40-specific pathway. Plays a role in mitochondrial morphology and in the inheritance of mitochondria. This chain is Mitochondrial distribution and morphology protein 10, found in Lachancea thermotolerans (strain ATCC 56472 / CBS 6340 / NRRL Y-8284) (Yeast).